The sequence spans 320 residues: Methionyl-tRNA formyltransferase (320 aa).

112 to 115 (SILP) serves as a coordination point for (6S)-5,6,7,8-tetrahydrofolate.

It belongs to the Fmt family.

It carries out the reaction L-methionyl-tRNA(fMet) + (6R)-10-formyltetrahydrofolate = N-formyl-L-methionyl-tRNA(fMet) + (6S)-5,6,7,8-tetrahydrofolate + H(+). Attaches a formyl group to the free amino group of methionyl-tRNA(fMet). The formyl group appears to play a dual role in the initiator identity of N-formylmethionyl-tRNA by promoting its recognition by IF2 and preventing the misappropriation of this tRNA by the elongation apparatus. This is Methionyl-tRNA formyltransferase from Shewanella woodyi (strain ATCC 51908 / MS32).